Here is a 369-residue protein sequence, read N- to C-terminus: Peptide chain release factor 2 (369 aa).

Residue Q251 is modified to N5-methylglutamine.

This sequence belongs to the prokaryotic/mitochondrial release factor family. In terms of processing, methylated by PrmC. Methylation increases the termination efficiency of RF2.

The protein localises to the cytoplasm. In terms of biological role, peptide chain release factor 2 directs the termination of translation in response to the peptide chain termination codons UGA and UAA. The sequence is that of Peptide chain release factor 2 from Chlamydia trachomatis serovar A (strain ATCC VR-571B / DSM 19440 / HAR-13).